Here is a 324-residue protein sequence, read N- to C-terminus: Heat-inducible transcription repressor HrcA (324 aa).

The protein belongs to the HrcA family.

Its function is as follows. Negative regulator of class I heat shock genes (grpE-dnaK-dnaJ and groELS operons). Prevents heat-shock induction of these operons. This Parasynechococcus marenigrum (strain WH8102) protein is Heat-inducible transcription repressor HrcA.